Consider the following 207-residue polypeptide: Ribosomal RNA small subunit methyltransferase G (207 aa).

Residues Gly73, Leu78, 124 to 125 (VE), and Arg139 contribute to the S-adenosyl-L-methionine site.

It belongs to the methyltransferase superfamily. RNA methyltransferase RsmG family.

It is found in the cytoplasm. It carries out the reaction guanosine(527) in 16S rRNA + S-adenosyl-L-methionine = N(7)-methylguanosine(527) in 16S rRNA + S-adenosyl-L-homocysteine. In terms of biological role, specifically methylates the N7 position of guanine in position 527 of 16S rRNA. The sequence is that of Ribosomal RNA small subunit methyltransferase G from Escherichia coli O1:K1 / APEC.